We begin with the raw amino-acid sequence, 335 residues long: Mevalonate kinase (335 aa).

ATP is bound at residue 111–121; it reads PVGAGLGSSAA. Asp-162 serves as the catalytic Proton acceptor.

This sequence belongs to the GHMP kinase family. Mevalonate kinase subfamily. As to quaternary structure, homodimer. Requires Mg(2+) as cofactor.

It is found in the cytoplasm. The catalysed reaction is (R)-mevalonate + ATP = (R)-5-phosphomevalonate + ADP + H(+). The protein operates within isoprenoid biosynthesis; isopentenyl diphosphate biosynthesis via mevalonate pathway; isopentenyl diphosphate from (R)-mevalonate: step 1/3. Its function is as follows. Catalyzes the phosphorylation of (R)-mevalonate (MVA) to (R)-mevalonate 5-phosphate (MVAP). Functions in the mevalonate (MVA) pathway leading to isopentenyl diphosphate (IPP), a key precursor for the biosynthesis of isoprenoid compounds such as archaeal membrane lipids. The polypeptide is Mevalonate kinase (Pyrococcus horikoshii (strain ATCC 700860 / DSM 12428 / JCM 9974 / NBRC 100139 / OT-3)).